Reading from the N-terminus, the 116-residue chain is Ig heavy chain V region 441 (116 aa).

A signal peptide spans 1 to 18; sequence MDFGLIFFIVALLKGVQC. The Ig-like domain maps to 19-116; sequence EVKLLESGGG…EDTALYYCAR (98 aa).

The protein is Ig heavy chain V region 441 of Mus musculus (Mouse).